The chain runs to 186 residues: Elongation factor P (186 aa).

It belongs to the elongation factor P family.

The protein localises to the cytoplasm. It participates in protein biosynthesis; polypeptide chain elongation. Involved in peptide bond synthesis. Stimulates efficient translation and peptide-bond synthesis on native or reconstituted 70S ribosomes in vitro. Probably functions indirectly by altering the affinity of the ribosome for aminoacyl-tRNA, thus increasing their reactivity as acceptors for peptidyl transferase. This is Elongation factor P from Prochlorococcus marinus (strain MIT 9301).